A 3241-amino-acid polypeptide reads, in one-letter code: PHD finger protein rhinoceros (3241 aa).

A compositionally biased stretch (basic residues) spans 1 to 16 (MSQRGKRGNQQHHQSH). The disordered stretch occupies residues 1–126 (MSQRGKRGNQ…GASSSSSWQA (126 aa)). 2 stretches are compositionally biased toward low complexity: residues 42 to 55 (PPNGATTAAVAEVT) and 90 to 126 (RAAAGATSTSKSKSTKLAKSASKCKSQGASSSSSWQA). Residues 312–362 (NVICDVCRSPDSEEANEMVFCDNCNICVHQACYGITAIPSGQWLCRTCSMG) form a PHD-type 1 zinc finger. The C2HC pre-PHD-type zinc finger occupies 364–398 (KPDCVLCPNKGGAMKSNKSGKHWAHVSCALWIPEV). The segment at 422 to 481 (LICVLCRKRVGSCIQCSVKPCKTAYHVTCAFQHGLEMRAIIEEGNAEDGVKLRSYCQKHS) adopts a PHD-type 2 zinc-finger fold. 6 disordered regions span residues 482-501 (MSKGKKENAGSHGGGSASVA), 508-554 (NRYG…ARAQ), 737-1266 (SGKQ…VATP), 1279-1483 (PQRQ…STKV), 1500-1613 (PKTN…SETR), and 1632-1746 (NLGA…QHLL). The span at 540-554 (KTELTSEERNQARAQ) shows a compositional bias: basic and acidic residues. A compositionally biased stretch (polar residues) spans 762–777 (KKLNNGILSSRTSSPE). Low complexity predominate over residues 807–874 (KSSAAAATST…SGSSSAGSGV (68 aa)). The segment covering 931-943 (ERCRNRQEPERGA) has biased composition (basic and acidic residues). Positions 949–965 (QSKSVPNRSQASRSKPT) are enriched in polar residues. Positions 995–1007 (DADESVSSDESEE) are enriched in acidic residues. Over residues 1019–1031 (STTTSGLATTGSA) the composition is skewed to low complexity. Positions 1060–1075 (TVESNVSDSQNQQTIR) are enriched in polar residues. A compositionally biased stretch (low complexity) spans 1087 to 1104 (TAATTSSTSQAASSTSKA). Composition is skewed to polar residues over residues 1117–1126 (IGNSTKTKPN) and 1151–1163 (NMRSTNLATTLQP). The segment covering 1184–1211 (KVKDSSSRVSNEADKSSLEKVRPKEHLQ) has biased composition (basic and acidic residues). The segment covering 1313–1327 (VTSATISGSGSSVPA) has biased composition (polar residues). Thr1346 is subject to Phosphothreonine. Ser1352 bears the Phosphoserine mark. Thr1364 bears the Phosphothreonine mark. Residues 1382-1426 (SSSSSGDSESSSSSSSSGSSSSSGGSDSDSESQASNSENPSSREP) are compositionally biased toward low complexity. The residue at position 1456 (Thr1456) is a Phosphothreonine. Positions 1463-1483 (NVLNIPSTRSRQNSTTKSTKV) are enriched in polar residues. Residues 1541 to 1558 (SPEKTVSRCKSRAEESPK) show a composition bias toward basic and acidic residues. Positions 1576-1594 (KGTSSLDKLLNKKQQQMNH) are enriched in polar residues. Positions 1599–1608 (TPPPISPTPP) are enriched in pro residues. The span at 1664 to 1675 (TAPTRTQLSASA) shows a compositional bias: polar residues. Residues 1688–1699 (PAAPLPASPTPT) are compositionally biased toward pro residues. Residues 1717-1731 (RRMRWRSRRRRRRRS) show a composition bias toward basic residues. Coiled coils occupy residues 1741–1770 (HTQHLLNEMEMARELEEERKNELLANASKY) and 1893–1925 (SEEDSIQATRNLLEKLRKTKRKAQDDCSSKEAV). 11 disordered regions span residues 2037 to 2061 (LEKSPHQKGACPLSSNGGANVGQPA), 2124 to 2148 (AERRSSSPSSVSESNDPPQPPPVVT), 2203 to 2227 (NNTNTTQHQPTTPAHQQQQQRTPNN), 2346 to 2454 (TPPV…GGVT), 2598 to 2629 (ATGTGTSPSKQHSGPTALVAPPTGPNPTPAPN), 2667 to 2691 (SEEVSIDSDSTIPHSKTSTSDARSQ), 2768 to 2811 (NDDS…NSSS), 2832 to 2911 (GAGA…SVDE), 2964 to 3015 (NKRG…TTTM), 3042 to 3169 (KAET…EAAM), and 3184 to 3241 (VNVG…CEVR). A compositionally biased stretch (polar residues) spans 2359–2381 (KRTSVSGSNLSKKQTHKSPQLPQ). Pro residues predominate over residues 2392–2402 (PLQPPTPPAPV). The span at 2430-2439 (GSGGSGAPGR) shows a compositional bias: gly residues. 2 stretches are compositionally biased toward polar residues: residues 2598–2611 (ATGTGTSPSKQHSG) and 2673–2689 (DSDSTIPHSKTSTSDAR). Residues 2855 to 2865 (NNDNNGKTGAA) show a composition bias toward polar residues. Residues 2876–2887 (KTLESSEDDHQA) are compositionally biased toward basic and acidic residues. Residues Ser2880 and Ser2881 each carry the phosphoserine modification. Polar residues predominate over residues 2899-2911 (ANETPSGVSSVDE). Residues 2964 to 2974 (NKRGVVVKDGE) are compositionally biased toward basic and acidic residues. Positions 2984-3002 (KRPKSSKPKKEKKEKKRQK) are enriched in basic residues. Positions 3003–3015 (QQQLILSSSTTTM) are enriched in low complexity. A phosphoserine mark is found at Ser3104 and Ser3110. Polar residues-rich tracts occupy residues 3115 to 3130 (LLNSFTPHSQNANTSP) and 3184 to 3197 (VNVGNYENSNNSLP). Over residues 3198-3218 (SASGTGSASSNSCNSNSINNN) the composition is skewed to low complexity. Residues 3219–3230 (GSGGGRASGEGG) are compositionally biased toward gly residues.

The protein belongs to the JADE family.

It localises to the nucleus. Functionally, may function as a negative regulator of the EGFR/Ras/MAPK signaling pathway during eye development. The chain is PHD finger protein rhinoceros (rno) from Drosophila melanogaster (Fruit fly).